The chain runs to 168 residues: Transcription antitermination protein NusB (168 aa).

This sequence belongs to the NusB family.

Involved in transcription antitermination. Required for transcription of ribosomal RNA (rRNA) genes. Binds specifically to the boxA antiterminator sequence of the ribosomal RNA (rrn) operons. In Bradyrhizobium sp. (strain ORS 278), this protein is Transcription antitermination protein NusB.